We begin with the raw amino-acid sequence, 670 residues long: Beta-fructofuranosidase 1 (670 aa).

The tract at residues 1 to 40 (MIPAVADPTTLDGGGARRPLLPETDPRGRAAAGAEQKRPP) is disordered. Residues 1–44 (MIPAVADPTTLDGGGARRPLLPETDPRGRAAAGAEQKRPPATPT) are Cytoplasmic-facing. The propeptide at 1 to 112 (MIPAVADPTT…APLLGSGALQ (112 aa)) is removed in mature form. A helical; Signal-anchor for type II membrane protein transmembrane segment spans residues 45–65 (VLTAVVSAVLLLVLVAVTVLA). The Lumenal portion of the chain corresponds to 66–670 (SQHVDGQAGG…RPYPATTTSL (605 aa)). Residues 136–139 (WMND), Gln-155, and Trp-163 contribute to the substrate site. The active site involves Asp-139. N-linked (GlcNAc...) asparagine glycosylation occurs at Asn-165. Residues 198–199 (WS) and 263–264 (RD) each bind substrate. N-linked (GlcNAc...) asparagine glycosylation is present at Asn-275. Substrate-binding residues include Glu-322 and Asp-362. Asn-518 is a glycosylation site (N-linked (GlcNAc...) asparagine). An intrachain disulfide couples Cys-519 to Cys-567. 2 N-linked (GlcNAc...) asparagine glycosylation sites follow: Asn-595 and Asn-639.

This sequence belongs to the glycosyl hydrolase 32 family. As to quaternary structure, may be present in two forms, a 70 kDa monomer and a heterodimer of the 30 kDa and 38 kDa subunits. The ratio of the levels of the two forms within cells appears to be regulated developmentally.

It is found in the membrane. The protein localises to the vacuole lumen. The catalysed reaction is Hydrolysis of terminal non-reducing beta-D-fructofuranoside residues in beta-D-fructofuranosides.. It functions in the pathway glycan biosynthesis; sucrose metabolism. The chain is Beta-fructofuranosidase 1 (IVR1) from Zea mays (Maize).